Consider the following 40-residue polypeptide: MADTTGRIPLWLIGTVAGIPVIGLVGVFFYGSYSGLGSSL.

The chain crosses the membrane as a helical span at residues 8–28; the sequence is IPLWLIGTVAGIPVIGLVGVF.

Belongs to the PsbJ family. As to quaternary structure, PSII is composed of 1 copy each of membrane proteins PsbA, PsbB, PsbC, PsbD, PsbE, PsbF, PsbH, PsbI, PsbJ, PsbK, PsbL, PsbM, PsbT, PsbX, PsbY, PsbZ, Psb30/Ycf12, at least 3 peripheral proteins of the oxygen-evolving complex and a large number of cofactors. It forms dimeric complexes.

The protein resides in the plastid. It is found in the chloroplast thylakoid membrane. In terms of biological role, one of the components of the core complex of photosystem II (PSII). PSII is a light-driven water:plastoquinone oxidoreductase that uses light energy to abstract electrons from H(2)O, generating O(2) and a proton gradient subsequently used for ATP formation. It consists of a core antenna complex that captures photons, and an electron transfer chain that converts photonic excitation into a charge separation. The chain is Photosystem II reaction center protein J from Hordeum jubatum (Foxtail barley).